We begin with the raw amino-acid sequence, 317 residues long: 4-hydroxy-3-methylbut-2-enyl diphosphate reductase (317 aa).

A [4Fe-4S] cluster-binding site is contributed by Cys12. The (2E)-4-hydroxy-3-methylbut-2-enyl diphosphate site is built by His41 and His74. Dimethylallyl diphosphate-binding residues include His41 and His74. Positions 41 and 74 each coordinate isopentenyl diphosphate. Residue Cys97 coordinates [4Fe-4S] cluster. His125 provides a ligand contact to (2E)-4-hydroxy-3-methylbut-2-enyl diphosphate. His125 contacts dimethylallyl diphosphate. Residue His125 coordinates isopentenyl diphosphate. Residue Glu127 is the Proton donor of the active site. Position 168 (Thr168) interacts with (2E)-4-hydroxy-3-methylbut-2-enyl diphosphate. Cys198 lines the [4Fe-4S] cluster pocket. (2E)-4-hydroxy-3-methylbut-2-enyl diphosphate is bound by residues Ser226, Ser227, Asn228, and Ser270. Dimethylallyl diphosphate-binding residues include Ser226, Ser227, Asn228, and Ser270. Isopentenyl diphosphate is bound by residues Ser226, Ser227, Asn228, and Ser270.

This sequence belongs to the IspH family. As to quaternary structure, homodimer. The cofactor is [4Fe-4S] cluster.

The enzyme catalyses isopentenyl diphosphate + 2 oxidized [2Fe-2S]-[ferredoxin] + H2O = (2E)-4-hydroxy-3-methylbut-2-enyl diphosphate + 2 reduced [2Fe-2S]-[ferredoxin] + 2 H(+). It catalyses the reaction dimethylallyl diphosphate + 2 oxidized [2Fe-2S]-[ferredoxin] + H2O = (2E)-4-hydroxy-3-methylbut-2-enyl diphosphate + 2 reduced [2Fe-2S]-[ferredoxin] + 2 H(+). It functions in the pathway isoprenoid biosynthesis; dimethylallyl diphosphate biosynthesis; dimethylallyl diphosphate from (2E)-4-hydroxy-3-methylbutenyl diphosphate: step 1/1. The protein operates within isoprenoid biosynthesis; isopentenyl diphosphate biosynthesis via DXP pathway; isopentenyl diphosphate from 1-deoxy-D-xylulose 5-phosphate: step 6/6. Functionally, catalyzes the conversion of 1-hydroxy-2-methyl-2-(E)-butenyl 4-diphosphate (HMBPP) into a mixture of isopentenyl diphosphate (IPP) and dimethylallyl diphosphate (DMAPP). Acts in the terminal step of the DOXP/MEP pathway for isoprenoid precursor biosynthesis. The polypeptide is 4-hydroxy-3-methylbut-2-enyl diphosphate reductase (Yersinia pseudotuberculosis serotype O:1b (strain IP 31758)).